Consider the following 248-residue polypeptide: Probable transcriptional regulatory protein BARBAKC583_0163 (248 aa).

Belongs to the TACO1 family.

It localises to the cytoplasm. This is Probable transcriptional regulatory protein BARBAKC583_0163 from Bartonella bacilliformis (strain ATCC 35685 / KC583 / Herrer 020/F12,63).